The primary structure comprises 238 residues: ATP synthase subunit a (238 aa).

A run of 5 helical transmembrane segments spans residues 18-38 (LTLLAVCIVTILLIFGFVFWA), 76-96 (YSLLLFTIFLFVAVANNLGLF), 114-134 (NLAFDLALSLFVTLLVHIEGI), 166-186 (SLAIRLFGNIFAGEVVTGLIV), and 193-213 (LYWWPIAFLVNIAWTAFSIFI).

It belongs to the ATPase A chain family. F-type ATPases have 2 components, CF(1) - the catalytic core - and CF(0) - the membrane proton channel. CF(1) has five subunits: alpha(3), beta(3), gamma(1), delta(1), epsilon(1). CF(0) has three main subunits: a(1), b(2) and c(9-12). The alpha and beta chains form an alternating ring which encloses part of the gamma chain. CF(1) is attached to CF(0) by a central stalk formed by the gamma and epsilon chains, while a peripheral stalk is formed by the delta and b chains.

It is found in the cell membrane. In terms of biological role, key component of the proton channel; it plays a direct role in the translocation of protons across the membrane. The polypeptide is ATP synthase subunit a (Streptococcus equi subsp. zooepidemicus (strain H70)).